A 131-amino-acid polypeptide reads, in one-letter code: MAAPKLGFFEKIANLTGALYRHQHAQFPRRFAILKAVGKHELAPPRQADWPAIKADWAKVQSFIQTGGYKNLSIREGLVYTAVTLEVVFWFFVGEMIGRRYIFGYLVPADYVSKSTKKTVKEQEALAALEN.

It belongs to the ATPase g subunit family. In terms of assembly, subunit of the F-type ATPase which has 2 components, CF(1) - the catalytic core - and CF(0) - the membrane proton channel.

The protein localises to the mitochondrion membrane. In terms of biological role, mitochondrial membrane ATP synthase (F(1)F(0) ATP synthase or Complex V) produces ATP from ADP in the presence of a proton gradient across the membrane which is generated by electron transport complexes of the respiratory chain. F-type ATPases consist of two structural domains, F(1) - containing the extramembraneous catalytic core, and F(0) - containing the membrane proton channel, linked together by a central stalk and a peripheral stalk. During catalysis, ATP synthesis in the catalytic domain of F(1) is coupled via a rotary mechanism of the central stalk subunits to proton translocation. Part of the complex F(0) domain. Minor subunit located with subunit a in the membrane. This is Probable ATP synthase subunit g 2, mitochondrial from Caenorhabditis elegans.